Reading from the N-terminus, the 155-residue chain is Small ribosomal subunit protein uS7cz/uS7cy (155 aa).

The protein belongs to the universal ribosomal protein uS7 family. Part of the 30S ribosomal subunit.

The protein resides in the plastid. The protein localises to the chloroplast. Functionally, one of the primary rRNA binding proteins, it binds directly to 16S rRNA where it nucleates assembly of the head domain of the 30S subunit. The chain is Small ribosomal subunit protein uS7cz/uS7cy (rps7-A) from Chloranthus spicatus (Chulantree).